We begin with the raw amino-acid sequence, 192 residues long: Protein A16 (192 aa).

The signal sequence occupies residues 1–22; the sequence is MLLANTAAAVLLLIVCIGASVG. A C-type lectin domain is found at 71-186; it reads KNKKFTIGTL…CLNPLNIFPY (116 aa). Cys-163 and Cys-177 are oxidised to a cystine.

Expressed in the gut of adults.

The sequence is that of Protein A16 (CTL3) from Anopheles gambiae (African malaria mosquito).